Consider the following 447-residue polypeptide: N-succinylarginine dihydrolase (447 aa).

Substrate contacts are provided by residues 19–28 (AGLSFGNEAS), N110, and 137–138 (HR). E174 is an active-site residue. A substrate-binding site is contributed by R212. H248 is a catalytic residue. Residues D250 and N359 each contribute to the substrate site. Catalysis depends on C365, which acts as the Nucleophile.

Belongs to the succinylarginine dihydrolase family. In terms of assembly, homodimer.

The enzyme catalyses N(2)-succinyl-L-arginine + 2 H2O + 2 H(+) = N(2)-succinyl-L-ornithine + 2 NH4(+) + CO2. It participates in amino-acid degradation; L-arginine degradation via AST pathway; L-glutamate and succinate from L-arginine: step 2/5. Functionally, catalyzes the hydrolysis of N(2)-succinylarginine into N(2)-succinylornithine, ammonia and CO(2). In Escherichia coli O17:K52:H18 (strain UMN026 / ExPEC), this protein is N-succinylarginine dihydrolase.